The chain runs to 402 residues: Endoplasmic reticulum junction formation protein lunapark-B (402 aa).

Over 1-45 (MGAIISRWKTKPSTVELLESLDKDIKDLEEFRAKNQRLLKLWVGR) the chain is Cytoplasmic. A helical transmembrane segment spans residues 46–66 (LLFYSSALYLLTCLCVYYLYF). Over 67 to 77 (PQQWGARLITA) the chain is Lumenal. Residues 78–98 (LPLLAFPALVLLLRKMLIFLF) form a helical membrane-spanning segment. Residues 99 to 402 (SKRTERNNDK…EEQKKEDESN (304 aa)) lie on the Cytoplasmic side of the membrane. Residues 100 to 128 (KRTERNNDKLEDLKTQKRKILEEVMETET) are a coiled coil. Positions 142–240 (ESKKKAEAEA…PGPGSGMRPP (99 aa)) are disordered. Over residues 205–222 (SASTPAGASQAETPQQMM) the composition is skewed to polar residues. The C4-type; plays a role in ER morphology zinc-finger motif lies at 276–301 (CQQCFSHNGMALKEEFEFVAFRCAYC). The segment at 311–402 (RPQAPRLPEF…EEQKKEDESN (92 aa)) is disordered. The span at 321 to 330 (SFERRLRSES) shows a compositional bias: basic and acidic residues. The segment covering 341 to 352 (TPEDSDAPEDDM) has biased composition (acidic residues). Residues 385 to 402 (PHAEAEALEEQKKEDESN) are compositionally biased toward basic and acidic residues.

It belongs to the lunapark family. Homodimer; homodimerization requires the C4-type zinc finger motif and decreases during mitosis in a phosphorylation-dependent manner. Post-translationally, phosphorylated. Phosphorylation occurs during interphase. Phosphorylation also occurs during mitosis; these phosphorylations reduce both its homodimerization and the ER three-way tubular junction formation.

Its subcellular location is the endoplasmic reticulum membrane. Endoplasmic reticulum (ER)-shaping membrane protein that plays a role in determining ER morphology. Involved in the stabilization of nascent three-way ER tubular junctions within the ER network. May also play a role as a curvature-stabilizing protein within three-way ER tubular junction network. The protein is Endoplasmic reticulum junction formation protein lunapark-B (lnpkb) of Danio rerio (Zebrafish).